The following is a 231-amino-acid chain: uncharacterized protein (231 aa).

Positions 3–119 constitute an RCK N-terminal domain; that stretch reads RADFCIIGLG…RTMGIREALI (117 aa). Positions 134 to 221 constitute an RCK C-terminal domain; the sequence is HGMETEIINL…VNQYLRYINP (88 aa).

This is an uncharacterized protein from Mycoplasma pneumoniae (strain ATCC 29342 / M129 / Subtype 1) (Mycoplasmoides pneumoniae).